Consider the following 359-residue polypeptide: Phosphoserine aminotransferase (359 aa).

Residue R41 participates in L-glutamate binding. Residues 75-76 (AS), W99, T147, D166, and Q189 contribute to the pyridoxal 5'-phosphate site. Residue K190 is modified to N6-(pyridoxal phosphate)lysine. 231-232 (NT) is a binding site for pyridoxal 5'-phosphate.

It belongs to the class-V pyridoxal-phosphate-dependent aminotransferase family. SerC subfamily. In terms of assembly, homodimer. Pyridoxal 5'-phosphate is required as a cofactor.

The protein localises to the cytoplasm. The enzyme catalyses O-phospho-L-serine + 2-oxoglutarate = 3-phosphooxypyruvate + L-glutamate. It carries out the reaction 4-(phosphooxy)-L-threonine + 2-oxoglutarate = (R)-3-hydroxy-2-oxo-4-phosphooxybutanoate + L-glutamate. The protein operates within amino-acid biosynthesis; L-serine biosynthesis; L-serine from 3-phospho-D-glycerate: step 2/3. Its pathway is cofactor biosynthesis; pyridoxine 5'-phosphate biosynthesis; pyridoxine 5'-phosphate from D-erythrose 4-phosphate: step 3/5. Its function is as follows. Catalyzes the reversible conversion of 3-phosphohydroxypyruvate to phosphoserine and of 3-hydroxy-2-oxo-4-phosphonooxybutanoate to phosphohydroxythreonine. The chain is Phosphoserine aminotransferase from Azobacteroides pseudotrichonymphae genomovar. CFP2.